We begin with the raw amino-acid sequence, 571 residues long: Isthmin-2 (571 aa).

The signal sequence occupies residues 1–26 (MRALRDRAGLLLCVLLLAALLEAALG). 3 disordered regions span residues 30–60 (KKPR…LKEE), 116–141 (ANTT…LREE), and 257–294 (EKDR…DEEE). Polar residues predominate over residues 116 to 131 (ANTTLSTPNPDTQASA). N117 carries N-linked (GlcNAc...) asparagine glycosylation. The segment covering 257 to 268 (EKDRAPGEKGEE) has biased composition (basic and acidic residues). Positions 269 to 294 (KEEDEDYPSEDIEGEDQEDKEEDEEE) are enriched in acidic residues. Residue N300 is glycosylated (N-linked (GlcNAc...) asparagine). Residues 327–371 (EPQKEWSPWSPCSGNCSTGKQQRTRPCGYGCTATETRTCDLPSCP) form the TSP type-1 domain. Intrachain disulfides connect C338–C365, C342–C370, and C353–C357. Residue N392 is glycosylated (N-linked (GlcNAc...) asparagine). The region spanning 396–559 (MHDQDVDSCE…RACTDNPLEE (164 aa)) is the AMOP domain.

The protein belongs to the isthmin family. In terms of tissue distribution, expressed at high levels in the placenta and at moderate levels in the pancreas, kidney, heart, liver, lung, brain and skeletal muscle.

Its subcellular location is the secreted. This is Isthmin-2 (ISM2) from Homo sapiens (Human).